The following is a 557-amino-acid chain: Formate--tetrahydrofolate ligase (557 aa).

Residue Thr-65–Thr-72 participates in ATP binding.

The protein belongs to the formate--tetrahydrofolate ligase family.

The catalysed reaction is (6S)-5,6,7,8-tetrahydrofolate + formate + ATP = (6R)-10-formyltetrahydrofolate + ADP + phosphate. It functions in the pathway one-carbon metabolism; tetrahydrofolate interconversion. In Methylorubrum extorquens (strain CM4 / NCIMB 13688) (Methylobacterium extorquens), this protein is Formate--tetrahydrofolate ligase.